A 1077-amino-acid chain; its full sequence is Deoxyribonuclease CdiA (1077 aa).

The segment at 67–384 is FHA-2; sequence IGTSRQKTTD…DRDNYDAKQS (318 aa). Positions 531–546 are enriched in polar residues; sequence QQNVDDLSRDTGNANG. The interval 531–555 is disordered; it reads QQNVDDLSRDTGNANGSIGPIFDKE. The VENN CT cleavage motif signature appears at 781 to 784; the sequence is VENN. Residues 954-1077 form a DNase activity region; sequence MPWEDYVGKT…GVKVTVTQVK (124 aa).

As to quaternary structure, interacts with cognate immunity protein CdiI-YPIII, which blocks its toxic DNase activity. Requires Zn(2+) as cofactor.

Its subcellular location is the target cell. The protein localises to the target cell cytoplasm. Toxic component of a toxin-immunity protein module, which functions as a cellular contact-dependent growth inhibition (CDI) system. CDI modules allow bacteria to communicate with and inhibit the growth of closely related neighboring bacteria in a contact-dependent fashion. The C-terminal 123 residues (954-1077) has DNase activity in the presence of Zn(2+), converting supercoiled DNA into open-circular form. Toxic activity is neutralized by coexpression of the cognate immunity protein CdiI-YPIII, but not by non-cognate immunity proteins from other toxin-immunity modules. Expression of the DNase domain as a chimera allows bacteria to attack other non-immune bacteria which become filamentous and have lost DNA staining. Its function is as follows. The CdiA protein is thought to be exported from the cell through the central lumen of CdiB, the other half of its two-partner system (TPS). The TPS domain probably remains associated with CdiB while the FHA-1 domain forms an extended filament with the receptor-binding domain (RBD) at its extremity; in the secretion arrested state the C-terminus of the RBD and YP domains form a hairpin-like structure as the FHA-2, PT and CT domains are periplasmic. The YP domain is probably responsible for this arrest at the point where it re-enters the host cell periplasm. Upon binding to a target cell outer membrane receptor a signal is transmitted to activate secretion. The filament elongates slightly, the rest of CdiA is secreted and the FHA-2 domain becomes stably associated with the target cell's outer membrane where it facilitates entry of the toxic CT domain into the target cell periplasm. From there the toxic CT domain is cleaved and gains access to the target cell cytoplasm via an inner membrane protein. In Yersinia pseudotuberculosis serotype O:3 (strain YPIII), this protein is Deoxyribonuclease CdiA.